A 317-amino-acid chain; its full sequence is GTP cyclohydrolase MptA (317 aa).

Belongs to the GTP cyclohydrolase IV family. As to quaternary structure, homodimer. Fe(2+) serves as cofactor.

It carries out the reaction GTP + H2O = 7,8-dihydroneopterin 2',3'-cyclic phosphate + formate + diphosphate + H(+). It functions in the pathway cofactor biosynthesis; 5,6,7,8-tetrahydromethanopterin biosynthesis. In terms of biological role, converts GTP to 7,8-dihydro-D-neopterin 2',3'-cyclic phosphate, the first intermediate in the biosynthesis of coenzyme methanopterin. The sequence is that of GTP cyclohydrolase MptA from Methanococcoides burtonii (strain DSM 6242 / NBRC 107633 / OCM 468 / ACE-M).